The sequence spans 206 residues: Ectodysplasin-A receptor-associated adapter protein (206 aa).

Disordered stretches follow at residues 1 to 36 and 52 to 77; these read MRPLQSYKAFEDHMAQEPVEDTDPSTLSFNTSDKYP and TLNCPPNSDMKNQGEENGFPDSTGDP. Polar residues-rich tracts occupy residues 24-33 and 52-62; these read PSTLSFNTSD and TLNCPPNSDMK. The Death domain occupies 114 to 190; the sequence is DVIRIKLDPC…DVEKVLRRWV (77 aa).

Self-associates and binds to EDAR, TRAF1, TRAF2 and TRAF3.

It localises to the cytoplasm. Its function is as follows. Adapter protein that interacts with EDAR DEATH domain and couples the receptor to EDA signaling pathway during morphogenesis of ectodermal organs. Mediates the activation of NF-kappa-B. The protein is Ectodysplasin-A receptor-associated adapter protein (EDARADD) of Macaca fascicularis (Crab-eating macaque).